The chain runs to 137 residues: NADH dehydrogenase [ubiquinone] 1 beta subcomplex subunit 7 (137 aa).

Residue G2 is the site of N-myristoyl glycine attachment. In terms of domain architecture, CHCH spans 56-98 (RDYCAHYLIRLLKCKRDSFPNFLACKHEQHDWDYCEHLDYVKR). The Cx9C motif 1 signature appears at 59–69 (CAHYLIRLLKC). Cystine bridges form between C59-C90 and C69-C80. S73 is subject to Phosphoserine. The short motif at 80–90 (CKHEQHDWDYC) is the Cx9C motif 2 element.

This sequence belongs to the complex I NDUFB7 subunit family. As to quaternary structure, complex I is composed of 45 different subunits.

The protein resides in the mitochondrion inner membrane. Its subcellular location is the mitochondrion intermembrane space. Functionally, accessory subunit of the mitochondrial membrane respiratory chain NADH dehydrogenase (Complex I), that is believed not to be involved in catalysis. Complex I functions in the transfer of electrons from NADH to the respiratory chain. The immediate electron acceptor for the enzyme is believed to be ubiquinone. The protein is NADH dehydrogenase [ubiquinone] 1 beta subcomplex subunit 7 (Ndufb7) of Mus musculus (Mouse).